The following is a 61-amino-acid chain: Large ribosomal subunit protein bL32 (61 aa).

Positions 1–16 (MAVPKRKTSPSKRGMR) are enriched in basic residues. The segment at 1–41 (MAVPKRKTSPSKRGMRRSADALKASTYVEDKNSGELRRPHH) is disordered. The segment covering 28–41 (VEDKNSGELRRPHH) has biased composition (basic and acidic residues).

Belongs to the bacterial ribosomal protein bL32 family.

In Rhizobium rhizogenes (strain K84 / ATCC BAA-868) (Agrobacterium radiobacter), this protein is Large ribosomal subunit protein bL32.